Here is a 185-residue protein sequence, read N- to C-terminus: MSERIEAAYRRILQDLGEDPDREGLKDTPARAAKAMRFLTKGYQEDLDQVLNGAVFSSDNDEMVIVRNIELYSLCEHHLLPFIGRAHVAYLPDGKVIGLSKVARIVDMYARRLQIQENLTRQIALAVQQVTGGKGVAVYINARHLCMMMRGVEKQNSEMSTSVMLGDFRENPKTRNEFLQLIRTP.

Zn(2+) contacts are provided by cysteine 75, histidine 78, and cysteine 146.

This sequence belongs to the GTP cyclohydrolase I family. In terms of assembly, toroid-shaped homodecamer, composed of two pentamers of five dimers.

It carries out the reaction GTP + H2O = 7,8-dihydroneopterin 3'-triphosphate + formate + H(+). The protein operates within cofactor biosynthesis; 7,8-dihydroneopterin triphosphate biosynthesis; 7,8-dihydroneopterin triphosphate from GTP: step 1/1. This chain is GTP cyclohydrolase 1, found in Alkalilimnicola ehrlichii (strain ATCC BAA-1101 / DSM 17681 / MLHE-1).